A 396-amino-acid polypeptide reads, in one-letter code: NADH-quinone oxidoreductase subunit D (396 aa).

This sequence belongs to the complex I 49 kDa subunit family. As to quaternary structure, NDH-1 is composed of 14 different subunits. Subunits NuoB, C, D, E, F, and G constitute the peripheral sector of the complex.

Its subcellular location is the cell inner membrane. The enzyme catalyses a quinone + NADH + 5 H(+)(in) = a quinol + NAD(+) + 4 H(+)(out). NDH-1 shuttles electrons from NADH, via FMN and iron-sulfur (Fe-S) centers, to quinones in the respiratory chain. The immediate electron acceptor for the enzyme in this species is believed to be ubiquinone. Couples the redox reaction to proton translocation (for every two electrons transferred, four hydrogen ions are translocated across the cytoplasmic membrane), and thus conserves the redox energy in a proton gradient. This Chelativorans sp. (strain BNC1) protein is NADH-quinone oxidoreductase subunit D.